A 204-amino-acid polypeptide reads, in one-letter code: Somatotropin (204 aa).

The signal sequence occupies residues 1-17 (MDRVVLLLSVLSLGVSS). Residue glutamine 18 is modified to Pyrrolidone carboxylic acid. A Zn(2+)-binding site is contributed by histidine 36. Cysteines 69 and 177 form a disulfide. Glutamate 186 is a binding site for Zn(2+). An intrachain disulfide couples cysteine 194 to cysteine 202.

Belongs to the somatotropin/prolactin family.

Its subcellular location is the secreted. Its function is as follows. Growth hormone plays an important role in growth control and is involved in the regulation of several anabolic processes. Implicated as an osmoregulatory substance important for seawater adaptation. This chain is Somatotropin (gh), found in Lates calcarifer (Barramundi).